We begin with the raw amino-acid sequence, 220 residues long: UPF0319 protein YccT (220 aa).

Residues 1 to 20 form the signal peptide; that stretch reads MKTGIVTTLIALCLPVSVFA.

The protein belongs to the UPF0319 family.

In Escherichia coli (strain 55989 / EAEC), this protein is UPF0319 protein YccT.